The sequence spans 932 residues: Adhesion G protein-coupled receptor E2 (932 aa).

The first 15 residues, 1-15 (MWGFWLLLFWGFSGT), serve as a signal peptide directing secretion. Residues 16 to 652 (HRWGMTTLAI…TMEFSLYIIS (637 aa)) are Extracellular-facing. 2 EGF-like domains span residues 32–69 (GVNE…SNGQ) and 81–119 (DVNE…SAGG). Intrachain disulfides connect Cys-36–Cys-48, Cys-42–Cys-57, Cys-85–Cys-98, Cys-92–Cys-107, Cys-137–Cys-149, Cys-143–Cys-158, Cys-160–Cys-171, Cys-177–Cys-189, Cys-183–Cys-198, Cys-226–Cys-239, and Cys-233–Cys-248. In terms of domain architecture, EGF-like 3; calcium-binding spans 133 to 172 (DVDECLTIGICPKNSNCSNSVGSYSCTCQSGFVSNGSTCE). Residues Asn-148 and Asn-167 are each glycosylated (N-linked (GlcNAc...) asparagine). In terms of domain architecture, EGF-like 4; calcium-binding spans 173–210 (DEDECVTRNACPEHATCHNTLGSYYCTCNEGLEFSGGG). Residues 222–260 (DVDECSRNSTLCGPSFICINTLGSYSCSCPAGFSLSTFQ) enclose the EGF-like 5; calcium-binding domain. Residue Asn-229 is glycosylated (N-linked (GlcNAc...) asparagine). 10 N-linked (GlcNAc...) asparagine glycosylation sites follow: Asn-269, Asn-283, Asn-309, Asn-333, Asn-344, Asn-363, Asn-405, Asn-417, Asn-474, and Asn-499. Residues 272-307 (DIDECDDICPSNSSCTNTLGSYFCTCHPGFASSNGQ) enclose the EGF-like 6; calcium-binding domain. 2 disulfide bridges follow: Cys-276–Cys-286 and Cys-280–Cys-295. The EGF-like 7; calcium-binding domain maps to 319 to 354 (DIDECTQDPFRCGRNSSCTNVPGSYNCSCLPDFRMD). 2 disulfide bridges follow: Cys-323–Cys-336 and Cys-330–Cys-345. In terms of domain architecture, GAIN-B spans 482–643 (EYLEIESKVI…AIIMASGELT (162 aa)). The Cell attachment site motif lies at 507 to 509 (RGD). Disulfide bonds link Cys-596–Cys-625 and Cys-613–Cys-627. The interval 596–643 (CVSWNTDVEDGRWTPSGCETVEASETHTVCSCNRMTNLAIIMASGELT) is GPS. The helical transmembrane segment at 653-673 (YVGTVISLVCLALAIATFLLF) threads the bilayer. At 674–681 (RAVQNHNT) the chain is on the cytoplasmic side. A helical membrane pass occupies residues 682 to 702 (YLHLHLCVCLFLAKILFLTGI). Over 703 to 719 (DKTDNQTACAIIAGFLH) the chain is Extracellular. Residue Asn-707 is glycosylated (N-linked (GlcNAc...) asparagine). The helical transmembrane segment at 720–740 (YLFLACFFWMLVEAVMLFLMV) threads the bilayer. At 741–756 (RNLKVVNYFSSRNIKM) the chain is on the cytoplasmic side. A helical membrane pass occupies residues 757 to 777 (LHLCAFGYGLPVVVVIISATV). Residues 778–795 (HPWGYGMHNRCWLNTETG) are Extracellular-facing. Residues 796 to 816 (FIWSFLGPVCMIITINSALLA) traverse the membrane as a helical segment. Residues 817-849 (WTLWVLRQKLCSVNSEVSKLKDTRLLTFKAIAQ) lie on the Cytoplasmic side of the membrane. Residues 850-870 (IFILGCSWVLGIFQIGPLASI) form a helical membrane-spanning segment. Over 871 to 872 (MA) the chain is Extracellular. The helical transmembrane segment at 873–893 (YLFTTINSLQGAFIFLIHCLL) threads the bilayer. Topologically, residues 894 to 932 (NRQVRDEYRKLLTRKTDLSSHSQTSGILLSSMPSTSKTG) are cytoplasmic.

This sequence belongs to the G-protein coupled receptor 2 family. Adhesion G-protein coupled receptor (ADGR) subfamily.

It localises to the cell membrane. In terms of biological role, orphan receptor involved in cell adhesion and probably in cell-cell interactions involved specifically cells of the immune system. May play a role in regulatory T-cells (Treg) development. In Rattus norvegicus (Rat), this protein is Adhesion G protein-coupled receptor E2 (Adgre1).